The primary structure comprises 129 residues: Small ribosomal subunit protein uS11 (129 aa).

The protein belongs to the universal ribosomal protein uS11 family. Part of the 30S ribosomal subunit. Interacts with proteins S7 and S18. Binds to IF-3.

Functionally, located on the platform of the 30S subunit, it bridges several disparate RNA helices of the 16S rRNA. Forms part of the Shine-Dalgarno cleft in the 70S ribosome. This chain is Small ribosomal subunit protein uS11, found in Enterobacter sp. (strain 638).